Reading from the N-terminus, the 530-residue chain is PC4 and SFRS1-interacting protein (530 aa).

The PWWP domain maps to 1-64 (MTRDFKPGDL…PKDIFPYSEN (64 aa)). K75 is covalently cross-linked (Glycyl lysine isopeptide (Lys-Gly) (interchain with G-Cter in SUMO2)). The disordered stretch occupies residues 88-349 (PKVKFSSQQA…VEKKRETSMD (262 aa)). A compositionally biased stretch (polar residues) spans 92-104 (FSSQQAATKQSNA). Phosphoserine occurs at positions 102, 105, and 106. Positions 113–135 (KETSVSKEDTDHEEKASNEDVTK) are enriched in basic and acidic residues. T115 and T122 each carry phosphothreonine. S129 bears the Phosphoserine mark. Phosphothreonine is present on T141. The span at 144–153 (AARRGRKRKA) shows a compositional bias: basic residues. A Nuclear localization signal motif is present at residues 146 to 156 (RRGRKRKAEKQ). T167 carries the post-translational modification Phosphothreonine. 2 positions are modified to phosphoserine: S177 and S206. A compositionally biased stretch (basic and acidic residues) spans 213-261 (EEDKSKKKGQEEKQPKKQPKKDEEGQKEEDKPRKEPDKKEGKKEVESKR). Residue S271 is modified to Phosphoserine. T272 bears the Phosphothreonine mark. S273 and S275 each carry phosphoserine. Residues 274-283 (DSEEEGDDQE) are compositionally biased toward acidic residues. Residues 287–302 (KRKGGRNFQTAHRRNM) are compositionally biased toward basic residues. Residues 305 to 349 (GQHEKEAADRKRKQEEQMETEQQNKDEGKKPEVKKVEKKRETSMD) are compositionally biased toward basic and acidic residues. 2 coiled-coil regions span residues 306-334 (QHEKEAADRKRKQEEQMETEQQNKDEGKK) and 371-395 (NRCIEALDELASLQVTMQQAQKHTE). Residues 340–417 (VEKKRETSMD…VSQVIMEKST (78 aa)) form an integrase-binding domain (IBD) region. Residue S434 is modified to Phosphoserine. The residue at position 437 (T437) is a Phosphothreonine. S443 is subject to Phosphoserine. The span at 446–473 (EQRQHEEANKTKDQGKKGPNKKLEKEQT) shows a compositional bias: basic and acidic residues. Residues 446–530 (EQRQHEEANK…ISLKDSTLDN (85 aa)) are disordered. Residues 474–494 (GSKTLNGGSDAQDGNQPQHNG) are compositionally biased toward polar residues. The segment covering 498 to 530 (EDSKDNHEASTKKKPSSEERETEISLKDSTLDN) has biased composition (basic and acidic residues). Position 514 is a phosphoserine (S514). A Citrulline modification is found at R517. Phosphoserine is present on S522. At T527 the chain carries Phosphothreonine.

The protein belongs to the HDGF family. Monomer. Interacts with IFRD1/PC4. Isoform 2 interacts with SFRS1. Isoform 1 interacts (via IBD domain) with POGZ (via IBM motif) and CDCA7L (via IBM motifs). Interacts (via IBD domain) with KMT2A (via IBM motifs) with a moderate affinity whereas interacts with the KMT2A-MEN1 complex with a greater affinity; MEN1 enhances interaction of KMT2A with PSIP1. Interacts with fusion protein KMT2A-MLLT3. Interacts (via IBD domain) with IWS1 (via IBM motif), MED1 (via IBM motif) and DBF4 (via IBM motifs). As to quaternary structure, (Microbial infection) Interacts (via IBD domain) with human HIV-1 integrase protein (HIV-1 IN), determining its nuclear localization, its tight association with chromatin and its protection from the proteasome. In terms of assembly, (Microbial infection) Interacts with HIV-2 IN. In terms of processing, citrullinated by PADI4. Widely expressed. Expressed at high level in the thymus. Expressed in fetal and adult brain. Expressed in neurons, but not astrocytes. Markedly elevated in fetal as compared to adult brain. In the adult brain, expressed in the subventricular zone (SVZ), in hippocampus, and undetectable elsewhere. In the fetal brain, expressed in the germinal neuroepithelium and cortical plate regions.

It localises to the nucleus. Functionally, transcriptional coactivator involved in neuroepithelial stem cell differentiation and neurogenesis. Involved in particular in lens epithelial cell gene regulation and stress responses. May play an important role in lens epithelial to fiber cell terminal differentiation. May play a protective role during stress-induced apoptosis. Isoform 2 is a more general and stronger transcriptional coactivator. Isoform 2 may also act as an adapter to coordinate pre-mRNA splicing. Cellular cofactor for lentiviral integration. This is PC4 and SFRS1-interacting protein (PSIP1) from Homo sapiens (Human).